Consider the following 361-residue polypeptide: uncharacterized protein (361 aa).

Position 41–48 (41–48 (GPLNSGKT)) interacts with ATP.

The protein belongs to the archaeal ATPase family.

This is an uncharacterized protein from Methanocaldococcus jannaschii (strain ATCC 43067 / DSM 2661 / JAL-1 / JCM 10045 / NBRC 100440) (Methanococcus jannaschii).